A 226-amino-acid polypeptide reads, in one-letter code: Thiopurine S-methyltransferase (226 aa).

S-adenosyl-L-methionine contacts are provided by W10, L47, E68, and R130.

It belongs to the class I-like SAM-binding methyltransferase superfamily. TPMT family.

Its subcellular location is the cytoplasm. The enzyme catalyses S-adenosyl-L-methionine + a thiopurine = S-adenosyl-L-homocysteine + a thiopurine S-methylether.. The polypeptide is Thiopurine S-methyltransferase (Shewanella sediminis (strain HAW-EB3)).